The chain runs to 160 residues: Transcriptional repressor NrdR (160 aa).

The segment at 3–34 (CPYCQYEDTQVKDSRPSEEGTVIRRRRICSVC) is a zinc-finger region. The 91-residue stretch at 49–139 (LLVLKKSGRY…VYRDFRNASD (91 aa)) folds into the ATP-cone domain.

The protein belongs to the NrdR family. Zn(2+) is required as a cofactor.

Functionally, negatively regulates transcription of bacterial ribonucleotide reductase nrd genes and operons by binding to NrdR-boxes. The protein is Transcriptional repressor NrdR of Bartonella henselae (strain ATCC 49882 / DSM 28221 / CCUG 30454 / Houston 1) (Rochalimaea henselae).